Here is a 44-residue protein sequence, read N- to C-terminus: Protein PsbN (44 aa).

The helical transmembrane segment at 6–26 threads the bilayer; it reads FFYGVFLWCLLISVTGYSIYI.

Belongs to the PsbN family.

Its subcellular location is the plastid. It localises to the chloroplast thylakoid membrane. Its function is as follows. May play a role in photosystem I and II biogenesis. This chain is Protein PsbN, found in Ostreococcus tauri.